The following is a 154-amino-acid chain: Cytochrome c oxidase subunit 5A, mitochondrial (154 aa).

A mitochondrion-targeting transit peptide spans 1–45 (MLAAALRRCXASVRVLLPKPGAAAPSSWSSSAFRATAAIQSVRCY). An SIFI-degron motif is present at residues 2–21 (LAAALRRCXASVRVLLPKPG). Residues K91 and K117 each carry the N6-acetyllysine modification. Residue T145 is modified to Phosphothreonine.

The protein belongs to the cytochrome c oxidase subunit 5A family. In terms of assembly, component of the cytochrome c oxidase (complex IV, CIV), a multisubunit enzyme composed of 14 subunits. The complex is composed of a catalytic core of 3 subunits MT-CO1, MT-CO2 and MT-CO3, encoded in the mitochondrial DNA, and 11 supernumerary subunits COX4I, COX5A, COX5B, COX6A, COX6B, COX6C, COX7A, COX7B, COX7C, COX8 and NDUFA4, which are encoded in the nuclear genome. The complex exists as a monomer or a dimer and forms supercomplexes (SCs) in the inner mitochondrial membrane with NADH-ubiquinone oxidoreductase (complex I, CI) and ubiquinol-cytochrome c oxidoreductase (cytochrome b-c1 complex, complex III, CIII), resulting in different assemblies (supercomplex SCI(1)III(2)IV(1) and megacomplex MCI(2)III(2)IV(2)). Interacts with AFG1L. Interacts with RAB5IF. In terms of processing, in response to mitochondrial stress, the precursor protein is ubiquitinated by the SIFI complex in the cytoplasm before mitochondrial import, leading to its degradation. Within the SIFI complex, UBR4 initiates ubiquitin chain that are further elongated or branched by KCMF1.

The protein localises to the mitochondrion inner membrane. It participates in energy metabolism; oxidative phosphorylation. Component of the cytochrome c oxidase, the last enzyme in the mitochondrial electron transport chain which drives oxidative phosphorylation. The respiratory chain contains 3 multisubunit complexes succinate dehydrogenase (complex II, CII), ubiquinol-cytochrome c oxidoreductase (cytochrome b-c1 complex, complex III, CIII) and cytochrome c oxidase (complex IV, CIV), that cooperate to transfer electrons derived from NADH and succinate to molecular oxygen, creating an electrochemical gradient over the inner membrane that drives transmembrane transport and the ATP synthase. Cytochrome c oxidase is the component of the respiratory chain that catalyzes the reduction of oxygen to water. Electrons originating from reduced cytochrome c in the intermembrane space (IMS) are transferred via the dinuclear copper A center (CU(A)) of subunit 2 and heme A of subunit 1 to the active site in subunit 1, a binuclear center (BNC) formed by heme A3 and copper B (CU(B)). The BNC reduces molecular oxygen to 2 water molecules using 4 electrons from cytochrome c in the IMS and 4 protons from the mitochondrial matrix. The chain is Cytochrome c oxidase subunit 5A, mitochondrial (COX5A) from Notamacropus parma (Parma wallaby).